The chain runs to 185 residues: Ribosome-recycling factor (185 aa).

The disordered stretch occupies residues 135–159 (ANDKLKASEKNKEASEDEVKRAQEK).

Belongs to the RRF family.

It localises to the cytoplasm. Responsible for the release of ribosomes from messenger RNA at the termination of protein biosynthesis. May increase the efficiency of translation by recycling ribosomes from one round of translation to another. In Moorella thermoacetica (strain ATCC 39073 / JCM 9320), this protein is Ribosome-recycling factor.